Consider the following 339-residue polypeptide: MGYIKFQKDRKFEIVPIGRVAIDFNPTDINRPLSKSMTFKKYLGGSPANIAVGLSRLGKKVGFIGKVSKDQFGKFVVDYFNNEGIDTSQIKYAENGESLGLTFTEIASPTESSILMYRNGIADLELDVNEIDEEYIKNTKAIVISGTALAKSPSREAALKALELAKKNDTVVIFDVDYREYNWKNKDEIAIYYSIVGKQSDIVMGSREEFDLMESLIVKEKSTDEESAKRWLGFGNKIVVIKHGKEGSTAYTNDGKSYKIKPFPVKLLKSFGGGDAYASAFIYGILEEWDIMDALEFGSASAAMLVASHSCSEDMPTVKEINEFIKEKKEQYGEMIARG.

It belongs to the carbohydrate kinase PfkB family.

It catalyses the reaction 5-dehydro-2-deoxy-D-gluconate + ATP = 6-phospho-5-dehydro-2-deoxy-D-gluconate + ADP + H(+). It functions in the pathway polyol metabolism; myo-inositol degradation into acetyl-CoA; acetyl-CoA from myo-inositol: step 5/7. Its function is as follows. Catalyzes the phosphorylation of 5-dehydro-2-deoxy-D-gluconate (2-deoxy-5-keto-D-gluconate or DKG) to 6-phospho-5-dehydro-2-deoxy-D-gluconate (DKGP). The sequence is that of 5-dehydro-2-deoxygluconokinase from Clostridium botulinum (strain Alaska E43 / Type E3).